The sequence spans 729 residues: MLYKGDTLYLDWLEDGIAELVFDAPGSVNKLDTATVASLGEAIGVLEQQSDLKGLLLRSNKAAFIVGADITEFLSLFLVPEEQLSQWLHFANSVFNRLEDLPVPTIAAVNGYALGGGCECVLATDYRLATPDLRIGLPETKLGIMPGFGGSVRMPRMLGADSALEIIAAGKDVGADQALKIGLVDGVVKAEKLIEGAMAILRQAINGDLDWKAKRQPKLEPLKLSEIEATMSFTIAKGMVAQTAGKHYPAPITAVKTIEAAARFGREEALNLENKSFVPLAHTNEARALVGIFLNDQYVKGKAKKLTKDVETPKQAAVLGAGIMGGGIAYQSAWKGVPVVMKDINDKSLTLGMTEAAKLLNKQLERGKIDGLKLAGVISTIHPTLDYAGFDRVDVVVEAVVENPKVKKAVLAETEQKVRPDTVLASNTSTIPISELANALERPENFCGMHFFNPVHRMPLVEIIRGEKSSDETIAKVVAWASKMGKTPIVVNDCPGFFVNRVLFPYFAGFSQLLRDGADFRKIDKVMEKQFGWPMGPAYLLDVVGIDTAHHAQAVMAAGFPQRMQKDYRDAIDALFDANRFGQKNGLGFWRYKEDSKGKPKKEEDAVVDDLLAEVSQPKRDFSEEEIIARMMIPMVNEVVRCLEEGIIATPAEADMALVYGLGFPPFHGGAFRWLDTLGSAKYLDMAQQYQHLGPLYEVPEGLRNKARHNEPYYPPVEPARPVGDLKTA.

Residues 1 to 189 form an enoyl-CoA hydratase/isomerase region; the sequence is MLYKGDTLYL…KIGLVDGVVK (189 aa). Position 296 (Asp296) interacts with substrate. Residues 311 to 729 are 3-hydroxyacyl-CoA dehydrogenase; that stretch reads ETPKQAAVLG…ARPVGDLKTA (419 aa). Residues Met324, Asp343, 400 to 402, Lys407, and Ser429 contribute to the NAD(+) site; that span reads VVE. Residue His450 is the For 3-hydroxyacyl-CoA dehydrogenase activity of the active site. Asn453 lines the NAD(+) pocket. Residues Asn500 and Tyr660 each coordinate substrate. The segment at 708–729 is disordered; that stretch reads RHNEPYYPPVEPARPVGDLKTA.

It in the N-terminal section; belongs to the enoyl-CoA hydratase/isomerase family. In the C-terminal section; belongs to the 3-hydroxyacyl-CoA dehydrogenase family. In terms of assembly, heterotetramer of two alpha chains (FadB) and two beta chains (FadA).

The enzyme catalyses a (3S)-3-hydroxyacyl-CoA + NAD(+) = a 3-oxoacyl-CoA + NADH + H(+). The catalysed reaction is a (3S)-3-hydroxyacyl-CoA = a (2E)-enoyl-CoA + H2O. It catalyses the reaction a 4-saturated-(3S)-3-hydroxyacyl-CoA = a (3E)-enoyl-CoA + H2O. It carries out the reaction (3S)-3-hydroxybutanoyl-CoA = (3R)-3-hydroxybutanoyl-CoA. The enzyme catalyses a (3Z)-enoyl-CoA = a 4-saturated (2E)-enoyl-CoA. The catalysed reaction is a (3E)-enoyl-CoA = a 4-saturated (2E)-enoyl-CoA. Its pathway is lipid metabolism; fatty acid beta-oxidation. Its function is as follows. Involved in the aerobic and anaerobic degradation of long-chain fatty acids via beta-oxidation cycle. Catalyzes the formation of 3-oxoacyl-CoA from enoyl-CoA via L-3-hydroxyacyl-CoA. It can also use D-3-hydroxyacyl-CoA and cis-3-enoyl-CoA as substrate. The protein is Fatty acid oxidation complex subunit alpha of Escherichia coli (strain SMS-3-5 / SECEC).